The following is a 107-amino-acid chain: Nucleoid-associated protein GDI3467/Gdia_2910 (107 aa).

It belongs to the YbaB/EbfC family. As to quaternary structure, homodimer.

It is found in the cytoplasm. The protein resides in the nucleoid. Functionally, binds to DNA and alters its conformation. May be involved in regulation of gene expression, nucleoid organization and DNA protection. The sequence is that of Nucleoid-associated protein GDI3467/Gdia_2910 from Gluconacetobacter diazotrophicus (strain ATCC 49037 / DSM 5601 / CCUG 37298 / CIP 103539 / LMG 7603 / PAl5).